Consider the following 310-residue polypeptide: Ribonuclease Z (310 aa).

Residues His64, His66, Asp68, His69, His142, Asp213, and His271 each coordinate Zn(2+). The active-site Proton acceptor is Asp68.

It belongs to the RNase Z family. As to quaternary structure, homodimer. Zn(2+) is required as a cofactor.

It carries out the reaction Endonucleolytic cleavage of RNA, removing extra 3' nucleotides from tRNA precursor, generating 3' termini of tRNAs. A 3'-hydroxy group is left at the tRNA terminus and a 5'-phosphoryl group is left at the trailer molecule.. Functionally, zinc phosphodiesterase, which displays some tRNA 3'-processing endonuclease activity. Probably involved in tRNA maturation, by removing a 3'-trailer from precursor tRNA. This is Ribonuclease Z from Treponema pallidum (strain Nichols).